The primary structure comprises 210 residues: Protein-L-isoaspartate O-methyltransferase (210 aa).

Serine 52 is an active-site residue.

It belongs to the methyltransferase superfamily. L-isoaspartyl/D-aspartyl protein methyltransferase family.

The protein resides in the cytoplasm. It catalyses the reaction [protein]-L-isoaspartate + S-adenosyl-L-methionine = [protein]-L-isoaspartate alpha-methyl ester + S-adenosyl-L-homocysteine. Catalyzes the methyl esterification of L-isoaspartyl residues in peptides and proteins that result from spontaneous decomposition of normal L-aspartyl and L-asparaginyl residues. It plays a role in the repair and/or degradation of damaged proteins. The sequence is that of Protein-L-isoaspartate O-methyltransferase from Protochlamydia amoebophila (strain UWE25).